A 243-amino-acid chain; its full sequence is Ubiquinone/menaquinone biosynthesis C-methyltransferase UbiE (243 aa).

S-adenosyl-L-methionine is bound by residues Thr69, Asp90, and 116 to 117; that span reads DA.

Belongs to the class I-like SAM-binding methyltransferase superfamily. MenG/UbiE family.

The catalysed reaction is a 2-demethylmenaquinol + S-adenosyl-L-methionine = a menaquinol + S-adenosyl-L-homocysteine + H(+). It carries out the reaction a 2-methoxy-6-(all-trans-polyprenyl)benzene-1,4-diol + S-adenosyl-L-methionine = a 5-methoxy-2-methyl-3-(all-trans-polyprenyl)benzene-1,4-diol + S-adenosyl-L-homocysteine + H(+). The protein operates within quinol/quinone metabolism; menaquinone biosynthesis; menaquinol from 1,4-dihydroxy-2-naphthoate: step 2/2. Its pathway is cofactor biosynthesis; ubiquinone biosynthesis. Functionally, methyltransferase required for the conversion of demethylmenaquinol (DMKH2) to menaquinol (MKH2) and the conversion of 2-polyprenyl-6-methoxy-1,4-benzoquinol (DDMQH2) to 2-polyprenyl-3-methyl-6-methoxy-1,4-benzoquinol (DMQH2). The protein is Ubiquinone/menaquinone biosynthesis C-methyltransferase UbiE of Paraburkholderia xenovorans (strain LB400).